The chain runs to 147 residues: MDEKMLNNILDEFLQKCKQKFGDDLISIILFGSYARGTAVEYSDVDLLVIAKNLPKRRIDRHKVLRDIVLEFIYRYGINISPILVEPRDLSLKSINPLICGILTGYKIIYDRDNFWKNYLERIKPIIKRIKPIFIDEEKEWKIADLI.

Positions 32–46 (GSYARGTAVEYSDVD) match the GSX(10)DXD motif motif. Mg(2+)-binding residues include Asp44 and Asp46.

This sequence belongs to the MntA antitoxin family. Mg(2+) serves as cofactor.

The catalysed reaction is L-tyrosyl-[protein] + ATP = O-(5'-adenylyl)-L-tyrosyl-[protein] + diphosphate. It carries out the reaction O-(5'-adenylyl)-L-tyrosyl-[protein] + ATP = O-[5'-(adenylyl-(5'-&gt;3')-adenylyl)]-L-tyrosyl-[protein] + diphosphate. Putative antitoxin component of a putative type VII toxin-antitoxin (TA) system. Its cognate toxin might be MJ1304, which it might AMPylate. This chain is Putative protein adenylyltransferase MJ1305, found in Methanocaldococcus jannaschii (strain ATCC 43067 / DSM 2661 / JAL-1 / JCM 10045 / NBRC 100440) (Methanococcus jannaschii).